The sequence spans 309 residues: Olfactory receptor 10J5 (309 aa).

At Met1–Leu27 the chain is on the extracellular side. A helical membrane pass occupies residues Phe28–Ile48. Over Thr49–Thr57 the chain is Cytoplasmic. The chain crosses the membrane as a helical span at residues Pro58 to Val78. Residues Pro79–Ser84 are Extracellular-facing. The chain crosses the membrane as a helical span at residues Leu85–Val105. A disulfide bridge links Cys97 with Cys178. Over Thr106 to Arg131 the chain is Cytoplasmic. The chain crosses the membrane as a helical span at residues Tyr132–Gly152. Residues Leu153–Ser203 lie on the Extracellular side of the membrane. The chain crosses the membrane as a helical span at residues Phe204 to Ile224. Residues Leu225–Lys235 are Cytoplasmic-facing. The chain crosses the membrane as a helical span at residues Ala236 to Ile256. At Ala257 to Asp270 the chain is on the extracellular side. A helical membrane pass occupies residues Leu271–Leu291. Topologically, residues Arg292–Ser309 are cytoplasmic.

Belongs to the G-protein coupled receptor 1 family. In terms of tissue distribution, expressed in the olfactory epithelium as well as in the testis. Expressed in round spermatids during stages VI-VIII of spermatogenesis.

The protein resides in the cell membrane. Functionally, olfactory receptor. Activated by the synthetic floral odorant, lyral, and by alpha-cedrene, a sesquiterpene constituent of cedarwood oil. Its activation increases intracellular Ca(2+). Acts as a key regulator of myogenesis through its actions on cell migration and adhesion by activating the Ca(2+)-dependent AKT signal transduction pathway. Also acts as a regulator of angiogenesis. Moreover, plays a role in the regulation of lipid accumulation in hepatocytes via the cAMP-PKA pathway. Involved in sperm chemotaxis and motility. The sequence is that of Olfactory receptor 10J5 from Mus musculus (Mouse).